The primary structure comprises 487 residues: Lysophospholipid acyltransferase 5 (487 aa).

Residue alanine 2 is modified to N-acetylalanine. Helical transmembrane passes span 44-64, 67-87, 111-131, 178-198, 236-256, and 285-305; these read LIFSIFLGYPLALFYRHYLFY, SYLIHLFHAFSGLSIAYFNFG, ITAVFTTLCFQMAYLLAGYYY, ILGVPSLLEVAGFSYFYGAFL, LGLVYLVGYTLLSPHITEDYL, and VTCWLVTEGVCILSGLGFNGF. A glycan (N-linked (GlcNAc...) asparagine) is linked at asparagine 308. Residues asparagine 338 and histidine 374 contribute to the active site. The next 3 helical transmembrane spans lie at 364-384, 422-442, and 453-473; these read GLSLLFLALWHGLHSGYLICF, LVQQTIHWLFMGYSMTAFCLF, and SIYFLGHVFFLSLLFTLPYVY. The Di-lysine motif motif lies at 484–487; it reads KKRE.

It belongs to the membrane-bound acyltransferase family.

It is found in the endoplasmic reticulum membrane. It catalyses the reaction a 1-acyl-sn-glycero-3-phosphocholine + an acyl-CoA = a 1,2-diacyl-sn-glycero-3-phosphocholine + CoA. The enzyme catalyses a 1-acyl-sn-glycero-3-phosphoethanolamine + an acyl-CoA = a 1,2-diacyl-sn-glycero-3-phosphoethanolamine + CoA. It carries out the reaction a 1-acyl-sn-glycero-3-phospho-L-serine + an acyl-CoA = a 1,2-diacyl-sn-glycero-3-phospho-L-serine + CoA. The catalysed reaction is (9Z,12Z)-octadecadienoyl-CoA + a 1-acyl-sn-glycero-3-phosphocholine = 1-acyl-2-(9Z,12Z)-octadecadienoyl-sn-glycero-3-phosphocholine + CoA. It catalyses the reaction (5Z,8Z,11Z,14Z)-eicosatetraenoyl-CoA + a 1-acyl-sn-glycero-3-phosphocholine = 1-acyl-2-(5Z,8Z,11Z,14Z-eicosatetraenoyl)-sn-glycero-3-phosphocholine + CoA. The enzyme catalyses dodecanoyl-CoA + 1-hexadecanoyl-sn-glycero-3-phosphocholine = 1-hexadecanoyl-2-dodecanoyl-sn-glycero-3-phosphocholine + CoA. It carries out the reaction octadecanoyl-CoA + 1-hexadecanoyl-sn-glycero-3-phosphocholine = 1-hexadecanoyl-2-octadecanoyl-sn-glycero-3-phosphocholine + CoA. The catalysed reaction is 1-dodecanoyl-sn-glycero-3-phosphocholine + hexadecanoyl-CoA = 1-dodecanoyl-2-hexadecanoyl-sn-glycero-3-phosphocholine + CoA. It catalyses the reaction 1-tetradecanoyl-sn-glycero-3-phosphocholine + hexadecanoyl-CoA = 1-tetradecanoyl-2-hexadecanoyl-sn-glycero-3-phosphocholine + CoA. The enzyme catalyses 1-hexadecanoyl-sn-glycero-3-phosphocholine + hexadecanoyl-CoA = 1,2-dihexadecanoyl-sn-glycero-3-phosphocholine + CoA. It carries out the reaction 1-octadecanoyl-sn-glycero-3-phosphocholine + hexadecanoyl-CoA = 1-octadecanoyl-2-hexadecanoyl-sn-glycero-3-phosphocholine + CoA. The catalysed reaction is 1-(9Z-octadecenoyl)-sn-glycero-3-phosphocholine + hexadecanoyl-CoA = 1-(9Z-octadecenoyl)-2-hexadecanoyl-sn-glycero-3-phosphocholine + CoA. It catalyses the reaction (9Z)-hexadecenoyl-CoA + 1-hexadecanoyl-sn-glycero-3-phosphocholine = 1-hexadecanoyl-2-(9Z-hexadecenoyl)-sn-glycero-3-phosphocholine + CoA. The enzyme catalyses 1-hexadecanoyl-sn-glycero-3-phosphocholine + (9Z)-octadecenoyl-CoA = 1-hexadecanoyl-2-(9Z-octadecenoyl)-sn-glycero-3-phosphocholine + CoA. It carries out the reaction (9Z,12Z)-octadecadienoyl-CoA + 1-hexadecanoyl-sn-glycero-3-phosphocholine = 1-hexadecanoyl-2-(9Z,12Z-octadecadienoyl)-sn-glycero-3-phosphocholine + CoA. The catalysed reaction is 1-dodecanoyl-sn-glycero-3-phosphocholine + (5Z,8Z,11Z,14Z)-eicosatetraenoyl-CoA = 1-dodecanoyl-2-(5Z,8Z,11Z,14Z)-eicosatetraenoyl-sn-glycero-3-phosphocholine + CoA. It catalyses the reaction (5Z,8Z,11Z,14Z)-eicosatetraenoyl-CoA + 1-hexadecanoyl-sn-glycero-3-phosphocholine = 1-hexadecanoyl-2-(5Z,8Z,11Z,14Z-eicosatetraenoyl)-sn-glycero-3-phosphocholine + CoA. The enzyme catalyses 1-octadecanoyl-sn-glycero-3-phosphocholine + (5Z,8Z,11Z,14Z)-eicosatetraenoyl-CoA = 1-octadecanoyl-2-(5Z,8Z,11Z,14Z-eicosatetraenoyl)-sn-glycero-3-phosphocholine + CoA. It carries out the reaction 1-eicosanoyl-sn-glycero-3-phosphocholine + (5Z,8Z,11Z,14Z)-eicosatetraenoyl-CoA = 1-eicosanoyl-2-(5Z,8Z,11Z,14Z)-eicosatetraenoyl-sn-glycero-3-phosphocholine + CoA. The catalysed reaction is 1-(9Z-octadecenoyl)-sn-glycero-3-phosphocholine + (9Z)-octadecenoyl-CoA = 1,2-di-(9Z-octadecenoyl)-sn-glycero-3-phosphocholine + CoA. It catalyses the reaction 1-(9Z-octadecenoyl)-sn-glycero-3-phosphocholine + (9Z,12Z)-octadecadienoyl-CoA = 1-(9Z)-octadecenoyl-2-(9Z,12Z)-octadecadienoyl-sn-glycero-3-phosphocholine + CoA. The enzyme catalyses 1-(9Z-octadecenoyl)-sn-glycero-3-phosphocholine + (5Z,8Z,11Z,14Z)-eicosatetraenoyl-CoA = 1-(9Z)-octadecenoyl-2-(5Z,8Z,11Z,14Z)-icosatetraenoyl-sn-glycero-3-phosphocholine + CoA. It carries out the reaction a 1-acyl-sn-glycero-3-phosphoethanolamine + (9Z,12Z)-octadecadienoyl-CoA = 1-acyl-2-(9Z,12Z)-octadecadienoyl-sn-glycero-3-phosphoethanolamine + CoA. The catalysed reaction is 1-(9Z-octadecenoyl)-sn-glycero-3-phosphoethanolamine + (9Z,12Z)-octadecadienoyl-CoA = 1-(9Z)-octadecenoyl-2-(9Z,12Z)-octadecadienoyl-sn-glycero-3-phosphoethanolamine + CoA. It catalyses the reaction 1-(10Z-heptadecenoyl)-sn-glycero-3-phosphoethanolamine + (9Z,12Z)-octadecadienoyl-CoA = 1-(10Z-heptadecenoyl)-2-(9Z,12Z-octadecadienoyl)-sn-glycero-3-phosphoethanolamine + CoA. The enzyme catalyses a 1-acyl-sn-glycero-3-phosphoethanolamine + (5Z,8Z,11Z,14Z)-eicosatetraenoyl-CoA = 1-acyl-2-(5Z,8Z,11Z,14Z)-eicosatetraenoyl-sn-glycero-3-phosphoethanolamine + CoA. It carries out the reaction 1-hexadecanoyl-sn-glycero-3-phosphoethanolamine + (5Z,8Z,11Z,14Z)-eicosatetraenoyl-CoA = 1-hexadecanoyl-2-(5Z,8Z,11Z,14Z-eicosatetraenoyl)-sn-glycero-3-phosphoethanolamine + CoA. The catalysed reaction is 1-(9Z-octadecenoyl)-sn-glycero-3-phosphoethanolamine + (5Z,8Z,11Z,14Z)-eicosatetraenoyl-CoA = 1-(9Z)-octadecenoyl-2-(5Z,8Z,11Z,14Z)-eicosatetraenoyl-sn-glycero-3-phosphoethanolamine + CoA. It catalyses the reaction 1-(10Z-heptadecenoyl)-sn-glycero-3-phosphoethanolamine + (5Z,8Z,11Z,14Z)-eicosatetraenoyl-CoA = 1-(10Z-heptadecenoyl)-2-(5Z,8Z,11Z,14Z-eicosatetraenoyl)-sn-glycero-3-phosphoethanolamine + CoA. The enzyme catalyses a 1-O-(1Z-alkenyl)-sn-glycero-3-phosphoethanolamine + (5Z,8Z,11Z,14Z)-eicosatetraenoyl-CoA = 1-O-(1Z)-alkenyl-2-(5Z,8Z,11Z,14Z)-eicosatetraenoyl-sn-glycero-3-phosphoethanolamine + CoA. It carries out the reaction a 1-acyl-sn-glycero-3-phospho-L-serine + (9Z,12Z)-octadecadienoyl-CoA = 1-acyl-2-(9Z,12Z-octadecadienoyl)-sn-glycero-3-phospho-L-serine + CoA. The catalysed reaction is a 1-acyl-sn-glycero-3-phospho-L-serine + (5Z,8Z,11Z,14Z)-eicosatetraenoyl-CoA = 1-acyl-2-(5Z,8Z,11Z,14Z-eicosatetraenoyl)-sn-glycero-3-phospho-L-serine + CoA. It catalyses the reaction 1-hexadecanoyl-sn-glycero-3-phospho-L-serine + (9Z)-octadecenoyl-CoA = 1-hexadecanoyl-2-(9Z-octadecenoyl)-sn-glycero-3-phospho-L-serine + CoA. The enzyme catalyses 1-(9Z-octadecenoyl)-sn-glycero-3-phospho-L-serine + (9Z)-octadecenoyl-CoA = 1,2-di-(9Z)-octadecenoyl-sn-glycero-3-phospho-L-serine + CoA. It carries out the reaction 1-hexadecanoyl-sn-glycero-3-phospho-L-serine + (9Z,12Z)-octadecadienoyl-CoA = 1-hexadecanoyl-2-(9Z,12Z-octadecadienoyl)-sn-glycero-3-phospho-L-serine + CoA. The catalysed reaction is 1-(9Z-octadecenoyl)-sn-glycero-3-phospho-L-serine + (9Z,12Z)-octadecadienoyl-CoA = 1-(9Z-octadecenoyl)-2-(9Z,12Z-octadienoyl)-sn-glycero-3-phospho-L-serine + CoA. It catalyses the reaction 1-hexadecanoyl-sn-glycero-3-phospho-L-serine + (5Z,8Z,11Z,14Z)-eicosatetraenoyl-CoA = 1-hexadecanoyl-2-(5Z,8Z,11Z,14Z-eicosatetraenoyl)-sn-glycero-3-phospho-L-serine + CoA. The enzyme catalyses 1-(9Z-octadecenoyl)-sn-glycero-3-phospho-L-serine + (5Z,8Z,11Z,14Z)-eicosatetraenoyl-CoA = 1-(9Z-octadecenoyl)-2-(5Z,8Z,11Z,14Z-eicosatetraenoyl)-sn-glycero-3-phospho-L-serine + CoA. Its pathway is lipid metabolism; phospholipid metabolism. Lysophospholipid O-acyltransferase (LPLAT) that catalyzes the reacylation step of the phospholipid remodeling process also known as the Lands cycle. Catalyzes transfer of the fatty acyl chain from fatty acyl-CoA to 1-acyl lysophospholipid to form various classes of phospholipids. Converts 1-acyl lysophosphatidylcholine (LPC) into phosphatidylcholine (PC) (LPCAT activity), 1-acyl lysophosphatidylserine (LPS) into phosphatidylserine (PS) (LPSAT activity) and 1-acyl lysophosphatidylethanolamine (LPE) into phosphatidylethanolamine (PE) (LPEAT activity). Favors polyunsaturated fatty acyl-CoAs as acyl donors compared to saturated fatty acyl-CoAs. Has higher activity for LPC acyl acceptors compared to LPEs and LPSs. Can also transfer the fatty acyl chain from fatty acyl-CoA to 1-O-alkyl lysophospholipid or 1-O-alkenyl lysophospholipid with lower efficiency. Acts as a major LPC O-acyltransferase in liver and intestine. As a component of the liver X receptor/NR1H3 or NR1H2 signaling pathway, mainly catalyzes the incorporation of arachidonate into PCs of endoplasmic reticulum (ER) membranes, increasing membrane dynamics and enabling triacylglycerols transfer to nascent very low-density lipoprotein (VLDL) particles. Promotes processing of sterol regulatory protein SREBF1 in hepatocytes, likely by facilitating the translocation of SREBF1-SCAP complex from ER to the Golgi apparatus. Participates in mechanisms by which the liver X receptor/NR1H3 or NR1H2 signaling pathway counteracts lipid-induced ER stress response and inflammation. Down-regulates hepatic inflammation by limiting arachidonic acid availability for synthesis of inflammatory eicosanoids, such as prostaglandins. In enterocytes, acts as a component of a gut-brain feedback loop that coordinates dietary lipid absorption and food intake. Regulates the abundance of PCs containing linoleate and arachidonate in enterocyte membranes, enabling passive diffusion of fatty acids and cholesterol across the membrane for efficient chylomicron assembly. In the intestinal crypt, acts as a component of dietary-responsive phospholipid-cholesterol axis, regulating the biosynthesis of cholesterol and its mitogenic effects on intestinal stem cells. The sequence is that of Lysophospholipid acyltransferase 5 (Lpcat3) from Rattus norvegicus (Rat).